The primary structure comprises 188 residues: Elongation factor P (188 aa).

This sequence belongs to the elongation factor P family.

The protein resides in the cytoplasm. It participates in protein biosynthesis; polypeptide chain elongation. Its function is as follows. Involved in peptide bond synthesis. Stimulates efficient translation and peptide-bond synthesis on native or reconstituted 70S ribosomes in vitro. Probably functions indirectly by altering the affinity of the ribosome for aminoacyl-tRNA, thus increasing their reactivity as acceptors for peptidyl transferase. The chain is Elongation factor P from Aeromonas hydrophila subsp. hydrophila (strain ATCC 7966 / DSM 30187 / BCRC 13018 / CCUG 14551 / JCM 1027 / KCTC 2358 / NCIMB 9240 / NCTC 8049).